A 578-amino-acid chain; its full sequence is Glycosyltransferase family 92 protein RCOM_0530710 (578 aa).

Residues 21–43 (SFFSVRSLTACLSFFVFLLFISS) form a helical membrane-spanning segment. One can recognise a GT92 domain in the interval 295-531 (YELCACTMLW…QNQGSKDRAP (237 aa)).

It belongs to the glycosyltransferase 92 family.

The protein resides in the membrane. The polypeptide is Glycosyltransferase family 92 protein RCOM_0530710 (Ricinus communis (Castor bean)).